Here is a 165-residue protein sequence, read N- to C-terminus: MASGVQVADEVCRIFYDMKVRKCSTPEEIKKRKKAVIFCLSADKKCIIVEEGKEILVGDVGVTITDPFKHFVGMLPEKDCRYALYDASFETKESRKEELMFFLWAPELAPLKSKMIYASSKDAIKKKFQGIKHECQANGPEDLNRACIAEKLGGSLIVAFEGCPV.

Position 2 is an N-acetylalanine (Ala-2). Position 3 is a phosphoserine (Ser-3). The region spanning Gly-4–Gly-153 is the ADF-H domain. Residue Lys-19 is modified to N6-acetyllysine. The Nuclear localization signal signature appears at Lys-30–Lys-34.

This sequence belongs to the actin-binding proteins ADF family. Post-translationally, ISGylated.

Actin-depolymerizing protein. Severs actin filaments (F-actin) and binds to actin monomers (G-actin). Acts in a pH-independent manner. This chain is Destrin (DSTN), found in Bos taurus (Bovine).